Here is a 623-residue protein sequence, read N- to C-terminus: Protein EDS1L (623 aa).

Ala2 bears the N-acetylalanine mark. Ser123 acts as the Nucleophile in catalysis. Residues Asp187 and His317 each act as charge relay system in the active site.

In terms of assembly, homodimer. Interacts with RPS4, RPS6, SNC1, SRFR1, AvrRps4 and HopA1. Interacts with PAD4 (via N-terminus). Interacts with SAG101. EDS1-SAG101 and EDS1-PAD4 form separate complexes in pathogen-unchallenged cells.

The protein localises to the nucleus. It is found in the cytoplasm. It localises to the microsome. Positive regulator of basal resistance and of effector-triggered immunity specifically mediated by TIR-NB-LRR resistance proteins. Disruption by bacterial effector of EDS1-TIR-NB-LRR resistance protein interactions constitutes the first step in resistance activation. Triggers early plant defenses and hypersensitive response independently of PAD4, and then recruits PAD4 to potentiate plant defenses through the accumulation of salicylic acid. Nuclear localization is essential for basal and TIR-NB-LRR-conditioned immunity and for reprogramming defense gene expression, while cytoplasmic EDS1 is required to induce a complete immune response. Heterodimerization with PAD4 or SGA101 is necessary for TNL-mediated effector-triggered immunity. Contributes to nonhost resistance against E.amylovora. Has no direct lipase activity. This is Protein EDS1L from Arabidopsis thaliana (Mouse-ear cress).